The sequence spans 442 residues: Chromosomal replication initiator protein DnaA (442 aa).

A domain I, interacts with DnaA modulators region spans residues 1–69; the sequence is METLWDGILS…AQAGEQVIGR (69 aa). The interval 69-103 is domain II; it reads RPIQVDFIVSEQSEEALKPVIEREPAPAAPPANVA. The segment at 104–320 is domain III, AAA+ region; sequence SLNSKYTFSR…GALIRAVAYV (217 aa). Residues Gly148, Gly150, Lys151, and Thr152 each coordinate ATP. Residues 321 to 442 are domain IV, binds dsDNA; that stretch reads SISGLPMTVE…GNRLEADARH (122 aa).

Belongs to the DnaA family. In terms of assembly, oligomerizes as a right-handed, spiral filament on DNA at oriC.

The protein localises to the cytoplasm. In terms of biological role, plays an essential role in the initiation and regulation of chromosomal replication. ATP-DnaA binds to the origin of replication (oriC) to initiate formation of the DNA replication initiation complex once per cell cycle. Binds the DnaA box (a 9 base pair repeat at the origin) and separates the double-stranded (ds)DNA. Forms a right-handed helical filament on oriC DNA; dsDNA binds to the exterior of the filament while single-stranded (ss)DNA is stabiized in the filament's interior. The ATP-DnaA-oriC complex binds and stabilizes one strand of the AT-rich DNA unwinding element (DUE), permitting loading of DNA polymerase. After initiation quickly degrades to an ADP-DnaA complex that is not apt for DNA replication. Binds acidic phospholipids. The sequence is that of Chromosomal replication initiator protein DnaA from Gloeobacter violaceus (strain ATCC 29082 / PCC 7421).